An 843-amino-acid polypeptide reads, in one-letter code: Vacuolar membrane protease (843 aa).

Residues 1–16 (MTNSRRHIFERICAKA) lie on the Cytoplasmic side of the membrane. The helical transmembrane segment at 17–37 (FQSSLTCSIFGFTVLLILYLL) threads the bilayer. Residues 38–347 (DWKRIAQVPG…LAFGKYWQLN (310 aa)) are Vacuolar-facing. 3 N-linked (GlcNAc...) asparagine glycosylation sites follow: asparagine 96, asparagine 109, and asparagine 117. 2 residues coordinate Zn(2+): histidine 147 and aspartate 159. Residue glutamate 191 is the Proton acceptor of the active site. Glutamate 192 serves as a coordination point for Zn(2+). Asparagine 209 is a glycosylation site (N-linked (GlcNAc...) asparagine). Glutamate 217 lines the Zn(2+) pocket. A glycan (N-linked (GlcNAc...) asparagine) is linked at asparagine 275. A Zn(2+)-binding site is contributed by histidine 292. An N-linked (GlcNAc...) asparagine glycan is attached at asparagine 322. A helical transmembrane segment spans residues 348 to 368 (LPIYQVLNIIFAVICPIVLLL). The Cytoplasmic portion of the chain corresponds to 369–386 (TLIRFPSLYEQLKKPRYT). A helical membrane pass occupies residues 387–407 (VCFVVSCIFVSIFDTLTVLLL). Residues 408–417 (TWINPYVINS) lie on the Vacuolar side of the membrane. A helical transmembrane segment spans residues 418–438 (HTGLILALFYLTNLIALAFSF). Residues 439–456 (RAAATHSKLSSEDLSSIE) lie on the Cytoplasmic side of the membrane. The helical transmembrane segment at 457–477 (IVFIWYAQILWYLVFIVSVIL) threads the bilayer. At 478-484 (SIYFQLG) the chain is on the vacuolar side. A helical transmembrane segment spans residues 485-505 (STYWVTLSYLCTFTCCIMTII). The Cytoplasmic segment spans residues 506–566 (RINYFVDNVV…NRAHVKLIDN (61 aa)). The helical transmembrane segment at 567–587 (IWTVIYFIFNVPFPVFLCYDI) threads the bilayer. Residues 588–608 (LVETILPAGSQTLTDSVFSSK) lie on the Vacuolar side of the membrane. A helical membrane pass occupies residues 609-629 (LYKLVIFVVFLSLVNSGPFIF). The Cytoplasmic segment spans residues 630–636 (RALSKKS). A helical membrane pass occupies residues 637–657 (LAVLTMLWITLFVQALSVNPF). At 658–843 (TESAPLKLSF…LLKVKSSIVI (186 aa)) the chain is on the vacuolar side. N-linked (GlcNAc...) asparagine glycosylation is found at asparagine 677, asparagine 703, asparagine 707, asparagine 754, and asparagine 788.

Belongs to the peptidase M28 family. Requires Zn(2+) as cofactor.

It localises to the membrane. It is found in the vacuole membrane. In terms of biological role, may be involved in vacuolar sorting and osmoregulation. The protein is Vacuolar membrane protease of Schizosaccharomyces pombe (strain 972 / ATCC 24843) (Fission yeast).